A 251-amino-acid polypeptide reads, in one-letter code: 3-deoxy-manno-octulosonate cytidylyltransferase (251 aa).

Belongs to the KdsB family.

The protein localises to the cytoplasm. It catalyses the reaction 3-deoxy-alpha-D-manno-oct-2-ulosonate + CTP = CMP-3-deoxy-beta-D-manno-octulosonate + diphosphate. Its pathway is nucleotide-sugar biosynthesis; CMP-3-deoxy-D-manno-octulosonate biosynthesis; CMP-3-deoxy-D-manno-octulosonate from 3-deoxy-D-manno-octulosonate and CTP: step 1/1. The protein operates within bacterial outer membrane biogenesis; lipopolysaccharide biosynthesis. In terms of biological role, activates KDO (a required 8-carbon sugar) for incorporation into bacterial lipopolysaccharide in Gram-negative bacteria. The polypeptide is 3-deoxy-manno-octulosonate cytidylyltransferase (Agrobacterium fabrum (strain C58 / ATCC 33970) (Agrobacterium tumefaciens (strain C58))).